Reading from the N-terminus, the 472-residue chain is Chromosomal replication initiator protein DnaA (472 aa).

The interval Met-1–Glu-73 is domain I, interacts with DnaA modulators. Positions Glu-73–Ser-128 are domain II. The interval Ala-89–Ala-124 is disordered. Basic and acidic residues predominate over residues Glu-99–Ala-109. Residues Glu-110–Ser-119 are compositionally biased toward polar residues. Positions Pro-129 to Ser-351 are domain III, AAA+ region. ATP-binding residues include Gly-176, Gly-178, Lys-179, and Thr-180. Positions Lys-352–Glu-472 are domain IV, binds dsDNA.

It belongs to the DnaA family. As to quaternary structure, oligomerizes as a right-handed, spiral filament on DNA at oriC.

The protein resides in the cytoplasm. Plays an essential role in the initiation and regulation of chromosomal replication. ATP-DnaA binds to the origin of replication (oriC) to initiate formation of the DNA replication initiation complex once per cell cycle. Binds the DnaA box (a 9 base pair repeat at the origin) and separates the double-stranded (ds)DNA. Forms a right-handed helical filament on oriC DNA; dsDNA binds to the exterior of the filament while single-stranded (ss)DNA is stabiized in the filament's interior. The ATP-DnaA-oriC complex binds and stabilizes one strand of the AT-rich DNA unwinding element (DUE), permitting loading of DNA polymerase. After initiation quickly degrades to an ADP-DnaA complex that is not apt for DNA replication. Binds acidic phospholipids. This Rhodopseudomonas palustris (strain TIE-1) protein is Chromosomal replication initiator protein DnaA.